Consider the following 241-residue polypeptide: Tetrahydromethanopterin S-methyltransferase subunit A (241 aa).

The Cytoplasmic segment spans residues 1 to 220; sequence MAEKKEPAEG…HSGVLAGKIE (220 aa). 5-hydroxybenzimidazolylcob(I)amide is bound at residue His85. Residues 221–241 traverse the membrane as a helical segment; the sequence is GIMVGLVLSLFVLGLLLFGGM.

Belongs to the MtrA family. In terms of assembly, the complex is composed of 8 subunits; MtrA, MtrB, MtrC, MtrD, MtrE, MtrF, MtrG and MtrH. 5-hydroxybenzimidazolylcob(I)amide serves as cofactor.

The protein localises to the cell membrane. The enzyme catalyses 5-methyl-5,6,7,8-tetrahydromethanopterin + coenzyme M + 2 Na(+)(in) = 5,6,7,8-tetrahydromethanopterin + methyl-coenzyme M + 2 Na(+)(out). The protein operates within one-carbon metabolism; methanogenesis from CO(2); methyl-coenzyme M from 5,10-methylene-5,6,7,8-tetrahydromethanopterin: step 2/2. Functionally, part of a complex that catalyzes the formation of methyl-coenzyme M and tetrahydromethanopterin from coenzyme M and methyl-tetrahydromethanopterin. This is an energy-conserving, sodium-ion translocating step. The protein is Tetrahydromethanopterin S-methyltransferase subunit A of Methanohalobium evestigatum (strain ATCC BAA-1072 / DSM 3721 / NBRC 107634 / OCM 161 / Z-7303).